Consider the following 669-residue polypeptide: Leucine zipper putative tumor suppressor 2 (669 aa).

The segment covering 1-25 (MAIVQTLPVPLEPAPEAATAPQAPV) has biased composition (low complexity). 4 disordered regions span residues 1–56 (MAIV…PTFF), 92–131 (NEDFRTESPPSPSSDVEDAREQRAHNAHLRGPPPKLIPVS), 150–201 (PVLP…AADK), and 215–323 (GTLS…SDEA). The interval 1–332 (MAIVQTLPVP…ALLHCVLEGK (332 aa)) is required for centrosomal localization. Over residues 172–181 (LSGSQGSLTQ) the composition is skewed to polar residues. The segment covering 187 to 199 (ASSSSSSSSSSAA) has biased composition (low complexity). Polar residues predominate over residues 215–233 (GTLSDSGRNSLSSLPTYST). Low complexity-rich tracts occupy residues 241–251 (SSPGGHLPSHG) and 267–283 (GPSHSDSGRSSSSKSTG). Position 249 is a phosphoserine (S249). Positions 284–295 (SLGGRVAGGLLG) are enriched in gly residues. S296 is modified (phosphoserine). The span at 298 to 308 (TRASPDSSSCG) shows a compositional bias: polar residues. Positions 311-320 (SPPPPPPPPS) are enriched in pro residues. The stretch at 328-649 (VLEGKLRDRE…LELEARELAD (322 aa)) forms a coiled coil. The tract at residues 447-669 (SGEISLLKQQ…CLEEITATEI (223 aa)) is sufficient for interaction with CTNNB1. Positions 450–669 (ISLLKQQLKE…CLEEITATEI (220 aa)) are sufficient for interaction with KATNB1 and for inhibition of katanin-mediated microtubule severing. S570 bears the Phosphoserine mark. The short motif at 631–640 (LEQELQQLSL) is the Nuclear export signal element.

The protein belongs to the LZTS2 family. As to quaternary structure, interacts with KATNB1. Also interacts with CTNNB1, gamma-tubulin and KIF23. In terms of tissue distribution, highly expressed in prostate and testis, and at slightly lower levels in spleen, thymus, uterus, small intestine and colon.

The protein resides in the cytoplasm. Its subcellular location is the cytoskeleton. It localises to the microtubule organizing center. The protein localises to the centrosome. Functionally, negative regulator of katanin-mediated microtubule severing and release from the centrosome. Required for central spindle formation and the completion of cytokinesis. May negatively regulate axonal outgrowth by preventing the formation of microtubule bundles that are necessary for transport within the elongating axon. Negative regulator of the Wnt signaling pathway. Represses beta-catenin-mediated transcriptional activation by promoting the nuclear exclusion of beta-catenin. This Homo sapiens (Human) protein is Leucine zipper putative tumor suppressor 2.